The chain runs to 321 residues: uncharacterized protein (321 aa).

The next 9 helical transmembrane spans lie at 10 to 28 (LWCSFGVFLIIIIIIEMSI), 41 to 63 (IALYSSCISMLTAILFDVLIWIY), 94 to 111 (NVAMWFFLFQLFSISMVH), 116 to 138 (LFYGTFLALVFRSSIIFFGVWLL), 143 to 165 (FLFYVLSIILLFTGIITILSNGV), 200 to 222 (NGVIVATPLFLVLILIELNDIIF), 237 to 259 (PFIIITSSFFSIIGLRSIYVILA), 266 to 283 (YIIKYGITLILIFISIKI), and 293 to 315 (IMLSSFFIVCILVACFIIEKFFF).

The protein belongs to the TerC family.

Its subcellular location is the cell membrane. This is an uncharacterized protein from Buchnera aphidicola subsp. Baizongia pistaciae (strain Bp).